Here is a 276-residue protein sequence, read N- to C-terminus: MIERWTTAVLDTDLPGGWAVARGPDGFLYDDNGALFPRHWLKGQDLPLLAEHGIGHLDGEPVYLLELSARAEVPGCGWKGLRAFMLEGDHTLYKVLGYAAQIGTWAREHRYCGSCGRPMAQVPGERAMYCQPCDLRSYPRISPSMIVLITRGDEILLARSPRFVTGVYSTLAGFAEPGESAEDCLIREVREEVSIEVRNIQYVGSQCWPFPHSMMLGFHAEYAGGEIIPQEDEIEDAQWFSVHALPPLPASRSIARYLIDLYVARRLGHAEPVLPG.

Residue Arg-82 participates in substrate binding. Residues Cys-112 and Cys-115 each contribute to the Zn(2+) site. Glu-125 contacts substrate. Residues Cys-130 and Cys-133 each contribute to the Zn(2+) site. Tyr-138 serves as a coordination point for substrate. One can recognise a Nudix hydrolase domain in the interval 139–262; it reads PRISPSMIVL…SIARYLIDLY (124 aa). Residues Ala-172, Glu-188, and Glu-192 each contribute to the a divalent metal cation site. Positions 173–194 match the Nudix box motif; that stretch reads GFAEPGESAEDCLIREVREEVS. 206–213 serves as a coordination point for substrate; it reads QCWPFPHS. Glu-233 contributes to the a divalent metal cation binding site. Ala-255 is a binding site for substrate.

Belongs to the Nudix hydrolase family. NudC subfamily. Homodimer. Mg(2+) serves as cofactor. Requires Mn(2+) as cofactor. The cofactor is Zn(2+).

It catalyses the reaction a 5'-end NAD(+)-phospho-ribonucleoside in mRNA + H2O = a 5'-end phospho-adenosine-phospho-ribonucleoside in mRNA + beta-nicotinamide D-ribonucleotide + 2 H(+). It carries out the reaction NAD(+) + H2O = beta-nicotinamide D-ribonucleotide + AMP + 2 H(+). The enzyme catalyses NADH + H2O = reduced beta-nicotinamide D-ribonucleotide + AMP + 2 H(+). In terms of biological role, mRNA decapping enzyme that specifically removes the nicotinamide adenine dinucleotide (NAD) cap from a subset of mRNAs by hydrolyzing the diphosphate linkage to produce nicotinamide mononucleotide (NMN) and 5' monophosphate mRNA. The NAD-cap is present at the 5'-end of some mRNAs and stabilizes RNA against 5'-processing. Has preference for mRNAs with a 5'-end purine. Catalyzes the hydrolysis of a broad range of dinucleotide pyrophosphates. The chain is NAD-capped RNA hydrolase NudC from Pseudomonas fluorescens (strain ATCC BAA-477 / NRRL B-23932 / Pf-5).